Consider the following 226-residue polypeptide: Thiamine-phosphate synthase (226 aa).

Residues 46 to 50 (QLRDK) and N87 each bind 4-amino-2-methyl-5-(diphosphooxymethyl)pyrimidine. 2 residues coordinate Mg(2+): D88 and D107. S126 is a binding site for 4-amino-2-methyl-5-(diphosphooxymethyl)pyrimidine. 152 to 154 (TPT) contacts 2-[(2R,5Z)-2-carboxy-4-methylthiazol-5(2H)-ylidene]ethyl phosphate. A 4-amino-2-methyl-5-(diphosphooxymethyl)pyrimidine-binding site is contributed by K155. Position 183 (G183) interacts with 2-[(2R,5Z)-2-carboxy-4-methylthiazol-5(2H)-ylidene]ethyl phosphate.

It belongs to the thiamine-phosphate synthase family. Mg(2+) serves as cofactor.

The catalysed reaction is 2-[(2R,5Z)-2-carboxy-4-methylthiazol-5(2H)-ylidene]ethyl phosphate + 4-amino-2-methyl-5-(diphosphooxymethyl)pyrimidine + 2 H(+) = thiamine phosphate + CO2 + diphosphate. It carries out the reaction 2-(2-carboxy-4-methylthiazol-5-yl)ethyl phosphate + 4-amino-2-methyl-5-(diphosphooxymethyl)pyrimidine + 2 H(+) = thiamine phosphate + CO2 + diphosphate. The enzyme catalyses 4-methyl-5-(2-phosphooxyethyl)-thiazole + 4-amino-2-methyl-5-(diphosphooxymethyl)pyrimidine + H(+) = thiamine phosphate + diphosphate. It functions in the pathway cofactor biosynthesis; thiamine diphosphate biosynthesis; thiamine phosphate from 4-amino-2-methyl-5-diphosphomethylpyrimidine and 4-methyl-5-(2-phosphoethyl)-thiazole: step 1/1. Its function is as follows. Condenses 4-methyl-5-(beta-hydroxyethyl)thiazole monophosphate (THZ-P) and 2-methyl-4-amino-5-hydroxymethyl pyrimidine pyrophosphate (HMP-PP) to form thiamine monophosphate (TMP). This Mycobacterium sp. (strain JLS) protein is Thiamine-phosphate synthase.